A 205-amino-acid polypeptide reads, in one-letter code: ATP phosphoribosyltransferase (205 aa).

Belongs to the ATP phosphoribosyltransferase family. Short subfamily. In terms of assembly, heteromultimer composed of HisG and HisZ subunits.

The protein resides in the cytoplasm. The enzyme catalyses 1-(5-phospho-beta-D-ribosyl)-ATP + diphosphate = 5-phospho-alpha-D-ribose 1-diphosphate + ATP. The protein operates within amino-acid biosynthesis; L-histidine biosynthesis; L-histidine from 5-phospho-alpha-D-ribose 1-diphosphate: step 1/9. Catalyzes the condensation of ATP and 5-phosphoribose 1-diphosphate to form N'-(5'-phosphoribosyl)-ATP (PR-ATP). Has a crucial role in the pathway because the rate of histidine biosynthesis seems to be controlled primarily by regulation of HisG enzymatic activity. The chain is ATP phosphoribosyltransferase from Leptospira borgpetersenii serovar Hardjo-bovis (strain JB197).